Consider the following 294-residue polypeptide: 33 kDa chaperonin (294 aa).

2 cysteine pairs are disulfide-bonded: Cys239-Cys241 and Cys272-Cys275.

The protein belongs to the HSP33 family. In terms of processing, under oxidizing conditions two disulfide bonds are formed involving the reactive cysteines. Under reducing conditions zinc is bound to the reactive cysteines and the protein is inactive.

Its subcellular location is the cytoplasm. Its function is as follows. Redox regulated molecular chaperone. Protects both thermally unfolding and oxidatively damaged proteins from irreversible aggregation. Plays an important role in the bacterial defense system toward oxidative stress. The sequence is that of 33 kDa chaperonin from Lacticaseibacillus paracasei (strain ATCC 334 / BCRC 17002 / CCUG 31169 / CIP 107868 / KCTC 3260 / NRRL B-441) (Lactobacillus paracasei).